Here is a 199-residue protein sequence, read N- to C-terminus: Recombination protein RecR (199 aa).

Residues cysteine 58 to cysteine 73 form a C4-type zinc finger. Positions asparagine 81–proline 176 constitute a Toprim domain.

It belongs to the RecR family.

Its function is as follows. May play a role in DNA repair. It seems to be involved in an RecBC-independent recombinational process of DNA repair. It may act with RecF and RecO. This chain is Recombination protein RecR, found in Natranaerobius thermophilus (strain ATCC BAA-1301 / DSM 18059 / JW/NM-WN-LF).